The primary structure comprises 251 residues: YlmG homolog protein 2, chloroplastic (251 aa).

A chloroplast-targeting transit peptide spans methionine 1–valine 51. Helical transmembrane passes span glycine 119–isoleucine 139 and phenylalanine 183–alanine 203. Residues valine 232–histidine 243 show a composition bias toward basic residues. The tract at residues valine 232–threonine 251 is disordered.

It belongs to the YggT family.

Its subcellular location is the plastid. The protein resides in the chloroplast thylakoid membrane. Its function is as follows. Not required for the biogenesis and accumulation of native cytochrome b6 in the thylakoid membrane. Not functionally involved in the pathway for covalent binding of the c-type heme to cytochrome b6. This chain is YlmG homolog protein 2, chloroplastic, found in Arabidopsis thaliana (Mouse-ear cress).